A 282-amino-acid chain; its full sequence is Aquaporin NIP1-1 (282 aa).

2 helical membrane passes run 46–66 (IIAE…AVTI) and 74–94 (ITFP…VYAV). Positions 103–105 (NPA) match the NPA 1 motif. The next 3 membrane-spanning stretches (helical) occupy residues 125–145 (VLAQ…MFGG), 162–182 (SLVI…GVAT), and 186–206 (AIGE…VLIA). An NPA 2 motif is present at residues 215 to 217 (NPA). The helical transmembrane segment at 232-252 (IWVYVVGPVVGAVAGAWAYNL) threads the bilayer.

The protein belongs to the MIP/aquaporin (TC 1.A.8) family. NIP (TC 1.A.8.12) subfamily.

It localises to the membrane. In terms of biological role, aquaporins facilitate the transport of water and small neutral solutes across cell membranes. This is Aquaporin NIP1-1 (NIP1-1) from Zea mays (Maize).